Consider the following 946-residue polypeptide: Structure-specific endonuclease subunit SLX4 (946 aa).

Over residues 1–14 (MPASPLPALSPPAS) the composition is skewed to pro residues. Disordered regions lie at residues 1–35 (MPAS…IPPD), 54–119 (QHFD…EEAV), 147–318 (PSDE…GGFT), 339–399 (ADSA…AAQL), 416–471 (TKVP…PKHI), 577–748 (FPLL…GSGR), and 765–799 (ALSP…KADS). The span at 54-74 (QHFDDDIAGKDQEQSRKKSPE) shows a compositional bias: basic and acidic residues. Composition is skewed to basic residues over residues 160 to 169 (KAGKPRKPRA) and 182 to 195 (KPKR…KAAK). Basic and acidic residues predominate over residues 278-287 (AVSRRRDWTP). A compositionally biased stretch (basic residues) spans 453–469 (SKARSKKASTKAAAKPK). The segment covering 627–636 (KANDEPDHVM) has biased composition (basic and acidic residues). Positions 707 to 717 (KSQSAIATSGS) are enriched in polar residues. The segment covering 722–733 (KEPKRTKGKEVK) has biased composition (basic and acidic residues).

This sequence belongs to the SLX4 family. Forms a heterodimer with SLX1. In terms of processing, phosphorylated in response to DNA damage.

The protein resides in the nucleus. Regulatory subunit of the SLX1-SLX4 structure-specific endonuclease that resolves DNA secondary structures generated during DNA repair and recombination. Has endonuclease activity towards branched DNA substrates, introducing single-strand cuts in duplex DNA close to junctions with ss-DNA. The protein is Structure-specific endonuclease subunit SLX4 of Phaeosphaeria nodorum (strain SN15 / ATCC MYA-4574 / FGSC 10173) (Glume blotch fungus).